Consider the following 343-residue polypeptide: Ubiquitin carboxyl-terminal hydrolase isozyme L5 (343 aa).

The 213-residue stretch at 6–218 folds into the UCH catalytic domain; the sequence is GWCTIESDPG…IRFNLMAVIK (213 aa). Cys-83 (nucleophile) is an active-site residue. His-157 serves as the catalytic Proton donor. The tract at residues 242–266 is disordered; the sequence is LSELNSGSGGDNKEESGGATPTTKE. The ULD domain occupies 306 to 334; the sequence is NFTPLILNLIKGLAEKDNLQPLIQKAKDQ.

Belongs to the peptidase C12 family. As to quaternary structure, component of the 19S (PA700) regulatory complex of the 26S proteasome.

The protein localises to the cytoplasm. Its subcellular location is the nucleus. It catalyses the reaction Thiol-dependent hydrolysis of ester, thioester, amide, peptide and isopeptide bonds formed by the C-terminal Gly of ubiquitin (a 76-residue protein attached to proteins as an intracellular targeting signal).. Its function is as follows. Protease that specifically cleaves 'Lys-48'-linked polyubiquitin chains. Deubiquitinating enzyme associated with the 19S regulatory subunit of the 26S proteasome. The protein is Ubiquitin carboxyl-terminal hydrolase isozyme L5 (uch2) of Dictyostelium discoideum (Social amoeba).